Consider the following 154-residue polypeptide: 6,7-dimethyl-8-ribityllumazine synthase (154 aa).

5-amino-6-(D-ribitylamino)uracil-binding positions include phenylalanine 15, 47–49 (TFD), and 71–73 (AVI). 76-77 (ET) is a binding site for (2S)-2-hydroxy-3-oxobutyl phosphate. Histidine 79 (proton donor) is an active-site residue. Leucine 104 is a 5-amino-6-(D-ribitylamino)uracil binding site. Arginine 119 provides a ligand contact to (2S)-2-hydroxy-3-oxobutyl phosphate.

Belongs to the DMRL synthase family.

It carries out the reaction (2S)-2-hydroxy-3-oxobutyl phosphate + 5-amino-6-(D-ribitylamino)uracil = 6,7-dimethyl-8-(1-D-ribityl)lumazine + phosphate + 2 H2O + H(+). It functions in the pathway cofactor biosynthesis; riboflavin biosynthesis; riboflavin from 2-hydroxy-3-oxobutyl phosphate and 5-amino-6-(D-ribitylamino)uracil: step 1/2. Its function is as follows. Catalyzes the formation of 6,7-dimethyl-8-ribityllumazine by condensation of 5-amino-6-(D-ribitylamino)uracil with 3,4-dihydroxy-2-butanone 4-phosphate. This is the penultimate step in the biosynthesis of riboflavin. In Saccharolobus islandicus (strain L.S.2.15 / Lassen #1) (Sulfolobus islandicus), this protein is 6,7-dimethyl-8-ribityllumazine synthase.